Reading from the N-terminus, the 148-residue chain is Large ribosomal subunit protein bL9 (148 aa).

It belongs to the bacterial ribosomal protein bL9 family.

Binds to the 23S rRNA. The chain is Large ribosomal subunit protein bL9 from Heliobacterium modesticaldum (strain ATCC 51547 / Ice1).